Here is a 437-residue protein sequence, read N- to C-terminus: Inactive peptidyl-prolyl cis-trans isomerase shutdown (437 aa).

Residues Asp-92 to Val-178 form the PPIase FKBP-type domain. TPR repeat units follow at residues Val-209 to Ser-242, Val-258 to Cys-294, and Lys-295 to Asn-327.

Belongs to the FKBP6 family. Interacts with Hsp83.

The protein localises to the cytoplasm. Co-chaperone required during oogenesis to repress transposable elements and prevent their mobilization, which is essential for the germline integrity. Acts via the piRNA metabolic process, which mediates the repression of transposable elements during meiosis by forming complexes composed of piRNAs and Piwi proteins and govern the methylation and subsequent repression of transposons. Acts as a co-chaperone via its interaction with Hsp83/HSP90 and is required for the biogenesis of all three piRNA major populations. This is Inactive peptidyl-prolyl cis-trans isomerase shutdown (shu) from Bombyx mori (Silk moth).